The following is a 125-amino-acid chain: Small ribosomal subunit protein uS12 (125 aa).

The interval 1–24 (MPTISQLVRKPRKAKRTKSKVPAL) is disordered. The segment covering 9–19 (RKPRKAKRTKS) has biased composition (basic residues). Asp89 carries the 3-methylthioaspartic acid modification. A disordered region spans residues 101-125 (SLDTAGVKDRKQARSKYGSKRPKSA). Residues 113–125 (ARSKYGSKRPKSA) are compositionally biased toward basic residues.

This sequence belongs to the universal ribosomal protein uS12 family. In terms of assembly, part of the 30S ribosomal subunit. Contacts proteins S8 and S17. May interact with IF1 in the 30S initiation complex.

Functionally, with S4 and S5 plays an important role in translational accuracy. In terms of biological role, interacts with and stabilizes bases of the 16S rRNA that are involved in tRNA selection in the A site and with the mRNA backbone. Located at the interface of the 30S and 50S subunits, it traverses the body of the 30S subunit contacting proteins on the other side and probably holding the rRNA structure together. The combined cluster of proteins S8, S12 and S17 appears to hold together the shoulder and platform of the 30S subunit. This chain is Small ribosomal subunit protein uS12, found in Nitrosomonas europaea (strain ATCC 19718 / CIP 103999 / KCTC 2705 / NBRC 14298).